We begin with the raw amino-acid sequence, 218 residues long: Octanoyltransferase (218 aa).

Residues 32-214 (ALTPDEIWLV…HFTQLLGYND (183 aa)) enclose the BPL/LPL catalytic domain. Residues 71–78 (RGGQITYH), 143–145 (SLG), and 156–158 (GLA) contribute to the substrate site. Cys-174 functions as the Acyl-thioester intermediate in the catalytic mechanism.

It belongs to the LipB family.

It localises to the cytoplasm. It catalyses the reaction octanoyl-[ACP] + L-lysyl-[protein] = N(6)-octanoyl-L-lysyl-[protein] + holo-[ACP] + H(+). The protein operates within protein modification; protein lipoylation via endogenous pathway; protein N(6)-(lipoyl)lysine from octanoyl-[acyl-carrier-protein]: step 1/2. Catalyzes the transfer of endogenously produced octanoic acid from octanoyl-acyl-carrier-protein onto the lipoyl domains of lipoate-dependent enzymes. Lipoyl-ACP can also act as a substrate although octanoyl-ACP is likely to be the physiological substrate. In Histophilus somni (strain 129Pt) (Haemophilus somnus), this protein is Octanoyltransferase.